We begin with the raw amino-acid sequence, 280 residues long: Aspartate/glutamate leucyltransferase (280 aa).

The protein belongs to the R-transferase family. Bpt subfamily.

Its subcellular location is the cytoplasm. The catalysed reaction is N-terminal L-glutamyl-[protein] + L-leucyl-tRNA(Leu) = N-terminal L-leucyl-L-glutamyl-[protein] + tRNA(Leu) + H(+). The enzyme catalyses N-terminal L-aspartyl-[protein] + L-leucyl-tRNA(Leu) = N-terminal L-leucyl-L-aspartyl-[protein] + tRNA(Leu) + H(+). In terms of biological role, functions in the N-end rule pathway of protein degradation where it conjugates Leu from its aminoacyl-tRNA to the N-termini of proteins containing an N-terminal aspartate or glutamate. The polypeptide is Aspartate/glutamate leucyltransferase (Cereibacter sphaeroides (strain KD131 / KCTC 12085) (Rhodobacter sphaeroides)).